The primary structure comprises 727 residues: DNA topoisomerase 3 (727 aa).

The Toprim domain occupies 3-136 (KTVVLAEKPS…LKRLWISSVT (134 aa)). 2 residues coordinate Mg(2+): Glu-9 and Asp-105. Residues 153–592 (FENLYHSAVA…EMKEYAKQTI (440 aa)) form the Topo IA-type catalytic domain. Positions 187–192 (SCGRVQ) are interaction with DNA. The active-site O-(5'-phospho-DNA)-tyrosine intermediate is Tyr-310. Positions 685–711 (RRAKDKNSKASKRDVHSYMKKQNKDEP) are enriched in basic and acidic residues. The tract at residues 685–713 (RRAKDKNSKASKRDVHSYMKKQNKDEPIN) is disordered.

The protein belongs to the type IA topoisomerase family. Mg(2+) is required as a cofactor.

It carries out the reaction ATP-independent breakage of single-stranded DNA, followed by passage and rejoining.. Functionally, releases the supercoiling and torsional tension of DNA, which is introduced during the DNA replication and transcription, by transiently cleaving and rejoining one strand of the DNA duplex. Introduces a single-strand break via transesterification at a target site in duplex DNA. The scissile phosphodiester is attacked by the catalytic tyrosine of the enzyme, resulting in the formation of a DNA-(5'-phosphotyrosyl)-enzyme intermediate and the expulsion of a 3'-OH DNA strand. The free DNA strand then undergoes passage around the unbroken strand, thus removing DNA supercoils. Finally, in the religation step, the DNA 3'-OH attacks the covalent intermediate to expel the active-site tyrosine and restore the DNA phosphodiester backbone. The sequence is that of DNA topoisomerase 3 from Bacillus licheniformis (strain ATCC 14580 / DSM 13 / JCM 2505 / CCUG 7422 / NBRC 12200 / NCIMB 9375 / NCTC 10341 / NRRL NRS-1264 / Gibson 46).